Reading from the N-terminus, the 219-residue chain is Ribose-5-phosphate isomerase A (219 aa).

Substrate is bound by residues 28–31, 81–84, and 94–97; these read TGST, DGAD, and KGGG. Residue Glu-103 is the Proton acceptor of the active site. Lys-121 serves as a coordination point for substrate.

Belongs to the ribose 5-phosphate isomerase family. Homodimer.

It catalyses the reaction aldehydo-D-ribose 5-phosphate = D-ribulose 5-phosphate. Its pathway is carbohydrate degradation; pentose phosphate pathway; D-ribose 5-phosphate from D-ribulose 5-phosphate (non-oxidative stage): step 1/1. Catalyzes the reversible conversion of ribose-5-phosphate to ribulose 5-phosphate. The chain is Ribose-5-phosphate isomerase A from Acidithiobacillus ferrooxidans (strain ATCC 23270 / DSM 14882 / CIP 104768 / NCIMB 8455) (Ferrobacillus ferrooxidans (strain ATCC 23270)).